We begin with the raw amino-acid sequence, 264 residues long: Ribosomal RNA small subunit methyltransferase A (264 aa).

N15, I17, G42, E64, D90, and N109 together coordinate S-adenosyl-L-methionine.

Belongs to the class I-like SAM-binding methyltransferase superfamily. rRNA adenine N(6)-methyltransferase family. RsmA subfamily.

It is found in the cytoplasm. It catalyses the reaction adenosine(1518)/adenosine(1519) in 16S rRNA + 4 S-adenosyl-L-methionine = N(6)-dimethyladenosine(1518)/N(6)-dimethyladenosine(1519) in 16S rRNA + 4 S-adenosyl-L-homocysteine + 4 H(+). Functionally, specifically dimethylates two adjacent adenosines (A1518 and A1519) in the loop of a conserved hairpin near the 3'-end of 16S rRNA in the 30S particle. May play a critical role in biogenesis of 30S subunits. The sequence is that of Ribosomal RNA small subunit methyltransferase A from Wolbachia pipientis subsp. Culex pipiens (strain wPip).